We begin with the raw amino-acid sequence, 344 residues long: MDLKGKKVTLHDMSLRDGMHAKQHQISLDEMVSIATGLDQAGIPLIEVTHGDGLGGSSLNYGFPAHTDEEYLSAVVPKMTQAKVSALLIPGIGTVDHLKMAYDHGVSTIRVATHCTEADVSEQHISAARKMGLDTVGFLMMAHMISPEELLAQAKLMESYGANCIYCTDSAGYMLPDDVSTRIALLRSELNSETEIGFHGHHNLGMSIPNSLAAIEMGANRIDGSVAGLGAGAGNTPLEVFTAVLDRMAVNHGIDLYKIMDVAEDLVMPMMDQPIRIDRNSLTLGYAGVYSSFLLFAERAEKKYGVPARDILLELGRLKTVGGQEDMIDDTAMTMAKALKAAKA.

In terms of domain architecture, Pyruvate carboxyltransferase spans 8 to 260 (VTLHDMSLRD…NHGIDLYKIM (253 aa)). Position 16 to 17 (16 to 17 (RD)) interacts with substrate. Asp-17 is a Mn(2+) binding site. His-20 functions as the Proton acceptor in the catalytic mechanism. Ser-170 and His-199 together coordinate substrate. Residues His-199 and His-201 each coordinate Mn(2+). Tyr-290 contributes to the substrate binding site.

The protein belongs to the 4-hydroxy-2-oxovalerate aldolase family.

The catalysed reaction is (S)-4-hydroxy-2-oxopentanoate = acetaldehyde + pyruvate. This chain is 4-hydroxy-2-oxovalerate aldolase (mhpE), found in Pseudoalteromonas translucida (strain TAC 125).